The following is a 330-amino-acid chain: Ferredoxin--NADP reductase (330 aa).

The FAD site is built by threonine 18, glutamate 37, glutamine 45, tyrosine 50, valine 90, phenylalanine 124, aspartate 286, and threonine 327.

Belongs to the ferredoxin--NADP reductase type 2 family. Homodimer. It depends on FAD as a cofactor.

The enzyme catalyses 2 reduced [2Fe-2S]-[ferredoxin] + NADP(+) + H(+) = 2 oxidized [2Fe-2S]-[ferredoxin] + NADPH. The sequence is that of Ferredoxin--NADP reductase from Halalkalibacterium halodurans (strain ATCC BAA-125 / DSM 18197 / FERM 7344 / JCM 9153 / C-125) (Bacillus halodurans).